The sequence spans 984 residues: uncharacterized protein (984 aa).

Residues 941 to 984 (FGPSGPGPNQGPGDDYNNFKSTKYPRNGYNKYQPNNRIHSRNRY) form a disordered region.

Its subcellular location is the virion. This is an uncharacterized protein from Acanthamoeba polyphaga (Amoeba).